Reading from the N-terminus, the 117-residue chain is Immunoglobulin kappa variable 9-129 (117 aa).

The first 22 residues, 1 to 22 (MDMRAPAQVFGFLLLWFPGARC), serve as a signal peptide directing secretion. The interval 23–45 (DIQMTQSPSSLSASLGERVSLTC) is framework-1. Cysteines 45 and 110 form a disulfide. Residues 46–56 (RASQDIHGYLN) are complementarity-determining-1. The framework-2 stretch occupies residues 57–71 (LFQQKPGETIKHLIY). The tract at residues 72–78 (ETSNLDS) is complementarity-determining-2. A framework-3 region spans residues 79–110 (GVPKRFSGSRSGSDYSLIIGSLESEDFADYYC). The interval 111-117 (LQYASSP) is complementarity-determining-3.

The protein is Immunoglobulin kappa variable 9-129 of Mus musculus (Mouse).